The chain runs to 474 residues: 6-phospho-beta-galactosidase (474 aa).

5 residues coordinate D-galactose 6-phosphate: Gln19, His116, Asn159, Glu160, and Asn297. Residue Glu160 is the Proton donor of the active site. The active-site Nucleophile is Glu375. 4 residues coordinate D-galactose 6-phosphate: Ser433, Trp434, Lys440, and Tyr442.

This sequence belongs to the glycosyl hydrolase 1 family.

The enzyme catalyses a 6-phospho-beta-D-galactoside + H2O = D-galactose 6-phosphate + an alcohol. Its pathway is carbohydrate metabolism; lactose degradation; D-galactose 6-phosphate and beta-D-glucose from lactose 6-phosphate: step 1/1. The sequence is that of 6-phospho-beta-galactosidase from Lacticaseibacillus casei (Lactobacillus casei).